A 268-amino-acid chain; its full sequence is 3-methyl-2-oxobutanoate hydroxymethyltransferase (268 aa).

Mg(2+) contacts are provided by D44 and D83. Residues 44 to 45 (DS), D83, and K113 contribute to the 3-methyl-2-oxobutanoate site. E115 lines the Mg(2+) pocket. E183 serves as the catalytic Proton acceptor.

Belongs to the PanB family. In terms of assembly, homodecamer; pentamer of dimers. Mg(2+) serves as cofactor.

The protein localises to the cytoplasm. It carries out the reaction 3-methyl-2-oxobutanoate + (6R)-5,10-methylene-5,6,7,8-tetrahydrofolate + H2O = 2-dehydropantoate + (6S)-5,6,7,8-tetrahydrofolate. Its pathway is cofactor biosynthesis; (R)-pantothenate biosynthesis; (R)-pantoate from 3-methyl-2-oxobutanoate: step 1/2. Catalyzes the reversible reaction in which hydroxymethyl group from 5,10-methylenetetrahydrofolate is transferred onto alpha-ketoisovalerate to form ketopantoate. The protein is 3-methyl-2-oxobutanoate hydroxymethyltransferase of Leptospira biflexa serovar Patoc (strain Patoc 1 / Ames).